Reading from the N-terminus, the 276-residue chain is 3beta-hydroxysteroid dehydrogenase (276 aa).

NADP(+) contacts are provided by residues 70-71 (DV), asparagine 97, tyrosine 162, and lysine 166. Tyrosine 162 functions as the Proton acceptor in the catalytic mechanism.

It belongs to the short-chain dehydrogenases/reductases (SDR) family.

It carries out the reaction 3-oxo-5beta-cholan-24-oate + NADPH + H(+) = isolithocholate + NADP(+). The enzyme catalyses 12alpha-hydroxy-3-oxo-5beta-cholan-24-oate + NADPH + H(+) = isodeoxycholate + NADP(+). The catalysed reaction is 12alpha-hydroxy-3-oxo-5beta-cholan-24-oate + NADH + H(+) = isodeoxycholate + NAD(+). It catalyses the reaction 7alpha,12alpha-dihydroxy-3-oxo-5beta-cholan-24-oate + NADPH + H(+) = isocholate + NADP(+). It carries out the reaction 3-oxochenodeoxycholate + NADPH + H(+) = isochenodeoxycholate + NADP(+). Functionally, involved in the modification of secondary bile acids into iso-bile acids (3beta-bile acids) via epimerization of the 3-OH group through a 3-oxo-intermediate. Catalyzes the reduction of 12-alpha-hydroxy-3-oxo-5-beta-cholan-24-oate (3-oxo-DCA) and 3-oxo-5-beta-cholan-24-oate (3-oxo-LCA) to yield isodeoxycholate (isoDCA) and isolithocholate (isoLCA), respectively. Is also able to catalyze the reduction of 3-dehydrocholate (3-oxo-CA or 7alpha,12alpha-dihydroxy-3-oxo-5beta-cholan-24-oate) and 7-alpha-hydroxy-3-oxo-5-beta-cholan-24-oate (3-oxo-CDCA), into isocholate (isoCA) and isochenodeoxycholate (isoCDCA), respectively. Accepts both NADPH and NADH as cosubstrates. The conversion of the abundant bile acid deoxycholate (DCA) into isoDCA by the gut bacterium R.gnavus favors the growth of the keystone commensal genus Bacteroides, since isoDCA is less cytotoxic than its parent compound, DCA; iso-bile acids have thus a potential role in modulating gut community composition. The polypeptide is 3beta-hydroxysteroid dehydrogenase (Mediterraneibacter gnavus (strain ATCC 29149 / DSM 114966 / JCM 6515 / VPI C7-9) (Ruminococcus gnavus)).